The following is a 235-amino-acid chain: Aspartate/glutamate leucyltransferase (235 aa).

The protein belongs to the R-transferase family. Bpt subfamily.

It is found in the cytoplasm. The catalysed reaction is N-terminal L-glutamyl-[protein] + L-leucyl-tRNA(Leu) = N-terminal L-leucyl-L-glutamyl-[protein] + tRNA(Leu) + H(+). The enzyme catalyses N-terminal L-aspartyl-[protein] + L-leucyl-tRNA(Leu) = N-terminal L-leucyl-L-aspartyl-[protein] + tRNA(Leu) + H(+). Its function is as follows. Functions in the N-end rule pathway of protein degradation where it conjugates Leu from its aminoacyl-tRNA to the N-termini of proteins containing an N-terminal aspartate or glutamate. This Pseudomonas syringae pv. tomato (strain ATCC BAA-871 / DC3000) protein is Aspartate/glutamate leucyltransferase.